Consider the following 396-residue polypeptide: DNA excision repair protein ERCC-8 (396 aa).

WD repeat units follow at residues 33–73 (NKDR…LYDL), 88–129 (CSIG…VWDT), 133–173 (QTAD…LCDL), 177–216 (SCSH…LWDV), 235–274 (QAVE…LWNS), 281–321 (LVNY…VYTV), and 325–363 (EQIT…AWVP). Residues 371 to 396 (DDDETTTKSQLNPAFEDAWSSSDEEG) form a disordered region. Phosphoserine is present on residues Ser-390, Ser-391, and Ser-392.

In terms of assembly, part of the CSA complex (also named DCX(ERCC8) complex), a DCX E3 ubiquitin-protein ligase complex containing ERCC8, RBX1, DDB1 and CUL4A; the CSA complex interacts with RNA polymerase II; upon UV irradiation it interacts with the COP9 signalosome and preferentially with the hyperphosphorylated form of RNA polymerase II. Interacts with ERCC6/CSB (via CIM motif); promoting recruitment to lesion-stalled RNA polymerase II (Pol II). Interacts with KIAA1530/UVSSA. Interacts with a subunit of RNA polymerase II TFIIH.

Its subcellular location is the nucleus. The protein localises to the chromosome. It is found in the nucleus matrix. It participates in protein modification; protein ubiquitination. In terms of biological role, substrate-recognition component of the CSA complex, a DCX (DDB1-CUL4-X-box) E3 ubiquitin-protein ligase complex, involved in transcription-coupled nucleotide excision repair (TC-NER), a process during which RNA polymerase II-blocking lesions are rapidly removed from the transcribed strand of active genes. Following recruitment to lesion-stalled RNA polymerase II (Pol II), the CSA complex mediates ubiquitination of Pol II subunit POLR2A/RPB1 at 'Lys-1268', a critical TC-NER checkpoint, governing RNA Pol II stability and initiating DNA damage excision by TFIIH recruitment. The CSA complex also promotes the ubiquitination and subsequent proteasomal degradation of ERCC6/CSB in a UV-dependent manner; ERCC6 degradation is essential for the recovery of RNA synthesis after transcription-coupled repair. Also plays a role in DNA double-strand breaks (DSSBs) repair by non-homologous end joining (NHEJ). This is DNA excision repair protein ERCC-8 from Homo sapiens (Human).